Here is a 1262-residue protein sequence, read N- to C-terminus: Tau-tubulin kinase homolog Asator (1262 aa).

The disordered stretch occupies residues 13-35 (NASAPDDGNQSCQPSSKQDQYLS). The segment covering 20-35 (GNQSCQPSSKQDQYLS) has biased composition (polar residues). The 264-residue stretch at 173–436 (WKVVRKIGGG…MLIGLFERCM (264 aa)) folds into the Protein kinase domain. ATP-binding positions include 179 to 187 (IGGGGFGEI) and Lys202. The active-site Proton acceptor is Asp293. 3 disordered regions span residues 662–724 (TVTN…TSNA), 755–792 (RSAT…ARSS), and 984–1003 (KDSA…SRHR). Over residues 667-679 (KTSEVNRSTEEQK) the composition is skewed to basic and acidic residues. Residues 755–776 (RSATSTNLRPSSSASQRINSGS) show a composition bias toward polar residues.

This sequence belongs to the protein kinase superfamily. CK1 Ser/Thr protein kinase family. As to quaternary structure, interacts with Mgtor. Mg(2+) serves as cofactor. In terms of tissue distribution, detected in larval brain.

Its subcellular location is the cytoplasm. It is found in the cytoskeleton. The protein localises to the spindle. It carries out the reaction L-seryl-[protein] + ATP = O-phospho-L-seryl-[protein] + ADP + H(+). It catalyses the reaction L-threonyl-[protein] + ATP = O-phospho-L-threonyl-[protein] + ADP + H(+). Its function is as follows. Probable serine/threonine protein kinase. This Drosophila melanogaster (Fruit fly) protein is Tau-tubulin kinase homolog Asator.